The following is a 222-amino-acid chain: Homing endonuclease I-ApeI (222 aa).

As to quaternary structure, probably functions as a monomer. Mg(2+) serves as cofactor. It depends on Mn(2+) as a cofactor.

In terms of biological role, endonuclease involved in 16S rRNA intron I-alpha homing. Recognizes the minimal target 5'-GCAAGGCTGAAACTTAAAGG-3'; generates 4 base 3' protruding ends 5'-AAAC-3' and 5'-GTTT-3'. The polypeptide is Homing endonuclease I-ApeI (apeI) (Aeropyrum pernix (strain ATCC 700893 / DSM 11879 / JCM 9820 / NBRC 100138 / K1)).